A 319-amino-acid polypeptide reads, in one-letter code: Lambda-crystallin homolog (319 aa).

At Ala-2 the chain carries N-acetylalanine. Ser-3 carries the post-translational modification Phosphoserine. NAD(+) is bound by residues 16–17 (LI), Asp-36, Glu-97, and Lys-102.

The protein belongs to the 3-hydroxyacyl-CoA dehydrogenase family. As to quaternary structure, homodimer. In terms of tissue distribution, widely expressed, with highest levels in liver. Undetectable in skeletal muscle.

The protein resides in the cytoplasm. The catalysed reaction is L-gulonate + NAD(+) = 3-dehydro-L-gulonate + NADH + H(+). Its activity is regulated as follows. Inhibited by malonate. Its function is as follows. Has high L-gulonate 3-dehydrogenase activity. It also exhibits low dehydrogenase activity toward L-3-hydroxybutyrate (HBA) and L-threonate. This is Lambda-crystallin homolog (Cryl1) from Mus musculus (Mouse).